The primary structure comprises 704 residues: Ion-translocating oxidoreductase complex subunit C (704 aa).

2 4Fe-4S ferredoxin-type domains span residues 368-397 (MGAPQEEKSCIRCSACADACPADLLPQQLY) and 407-436 (KATAHHIADCIECGACAWVCPSNIPLVQYF). Residues Cys-377, Cys-380, Cys-383, Cys-387, Cys-416, Cys-419, Cys-422, and Cys-426 each coordinate [4Fe-4S] cluster. Residues 534-682 (QARAKQAAHP…AEPADPRKAA (149 aa)) are disordered.

Belongs to the 4Fe4S bacterial-type ferredoxin family. RnfC subfamily. In terms of assembly, the complex is composed of six subunits: RsxA, RsxB, RsxC, RsxD, RsxE and RsxG. [4Fe-4S] cluster serves as cofactor.

It is found in the cell inner membrane. In terms of biological role, part of a membrane-bound complex that couples electron transfer with translocation of ions across the membrane. Required to maintain the reduced state of SoxR. The chain is Ion-translocating oxidoreductase complex subunit C from Salmonella enteritidis PT4 (strain P125109).